The following is a 96-amino-acid chain: Co-chaperonin GroES 1 (96 aa).

It belongs to the GroES chaperonin family. Heptamer of 7 subunits arranged in a ring. Interacts with the chaperonin GroEL.

The protein resides in the cytoplasm. Its function is as follows. Together with the chaperonin GroEL, plays an essential role in assisting protein folding. The GroEL-GroES system forms a nano-cage that allows encapsulation of the non-native substrate proteins and provides a physical environment optimized to promote and accelerate protein folding. GroES binds to the apical surface of the GroEL ring, thereby capping the opening of the GroEL channel. In Vibrio vulnificus (strain CMCP6), this protein is Co-chaperonin GroES 1.